The following is a 399-amino-acid chain: Carbamoyl phosphate synthase arginine-specific small chain (399 aa).

Residues D187–L379 form the Glutamine amidotransferase type-1 domain. C267 serves as the catalytic Nucleophile. Catalysis depends on residues H352 and E354.

It belongs to the CarA family. Heterodimer composed of 2 chains; the small (or glutamine) chain promotes the hydrolysis of glutamine to ammonia, which is used by the large (or ammonia) chain to synthesize carbamoyl phosphate.

It is found in the cytoplasm. It catalyses the reaction hydrogencarbonate + L-glutamine + 2 ATP + H2O = carbamoyl phosphate + L-glutamate + 2 ADP + phosphate + 2 H(+). It carries out the reaction L-glutamine + H2O = L-glutamate + NH4(+). It functions in the pathway amino-acid biosynthesis; L-arginine biosynthesis; carbamoyl phosphate from bicarbonate: step 1/1. Functionally, small subunit of the arginine-specific carbamoyl phosphate synthase (CPSase). CPSase catalyzes the formation of carbamoyl phosphate from the ammonia moiety of glutamine, carbonate, and phosphate donated by ATP, constituting the first step of 2 biosynthetic pathways, one leading to arginine and/or urea and the other to pyrimidine nucleotides. The small subunit (glutamine amidotransferase) binds and cleaves glutamine to supply the large subunit with the substrate ammonia. This chain is Carbamoyl phosphate synthase arginine-specific small chain (CPA1), found in Eremothecium gossypii (strain ATCC 10895 / CBS 109.51 / FGSC 9923 / NRRL Y-1056) (Yeast).